A 706-amino-acid chain; its full sequence is SPX domain-containing membrane protein Os09g0521800 (706 aa).

The region spanning Val2 to Arg145 is the SPX domain. Helical transmembrane passes span Met251–Val271, Leu281–Phe301, Leu318–Leu338, Ser340–Val359, Ala378–Leu398, and Leu414–Phe434. The disordered stretch occupies residues Ser475 to Thr498. Residues Glu476–His488 are compositionally biased toward acidic residues. Helical transmembrane passes span Leu520–Val540, Val554–Ile574, Ile583–Val603, Val611–Leu631, and Leu678–Leu698.

Belongs to the major facilitator superfamily.

It localises to the membrane. The sequence is that of SPX domain-containing membrane protein Os09g0521800 from Oryza sativa subsp. japonica (Rice).